The primary structure comprises 557 residues: Copine-6 (557 aa).

C2 domains lie at 1–127 and 134–263; these read MSDP…TKPL and NAGK…MQWD. The Ca(2+) site is built by aspartate 167, aspartate 173, aspartate 229, aspartate 231, and aspartate 237. A linker region region spans residues 244–303; the sequence is STFQEMQEGTANPGQEMQWDCINPKYRDKKKHYKSSGTVVLAQCTVEKVHTFLDYIMGGC. The 221-residue stretch at 306 to 526 folds into the VWFA domain; that stretch reads SFTVAIDFTA…ALAKCVLAEV (221 aa).

Belongs to the copine family. In terms of assembly, interacts (via second C2 domain) with OS9 (via C-terminus); this interaction occurs in a calcium-dependent manner in vitro. May interact with NECAB1. Ca(2+) is required as a cofactor.

It localises to the cytoplasm. Its subcellular location is the cell membrane. It is found in the endosome. The protein localises to the cytoplasmic vesicle. The protein resides in the clathrin-coated vesicle. It localises to the perikaryon. Its subcellular location is the cell projection. It is found in the dendrite. In terms of biological role, calcium-dependent phospholipid-binding protein that plays a role in calcium-mediated intracellular processes. Binds phospholipid membranes in a calcium-dependent manner. Plays a role in dendrite formation by melanocytes. This Bos taurus (Bovine) protein is Copine-6.